A 256-amino-acid chain; its full sequence is Thiazole synthase (256 aa).

Catalysis depends on K95, which acts as the Schiff-base intermediate with DXP. 1-deoxy-D-xylulose 5-phosphate-binding positions include G156, 182–183, and 204–205; these read AG and NT.

Belongs to the ThiG family. As to quaternary structure, homotetramer. Forms heterodimers with either ThiH or ThiS.

The protein resides in the cytoplasm. It catalyses the reaction [ThiS sulfur-carrier protein]-C-terminal-Gly-aminoethanethioate + 2-iminoacetate + 1-deoxy-D-xylulose 5-phosphate = [ThiS sulfur-carrier protein]-C-terminal Gly-Gly + 2-[(2R,5Z)-2-carboxy-4-methylthiazol-5(2H)-ylidene]ethyl phosphate + 2 H2O + H(+). The protein operates within cofactor biosynthesis; thiamine diphosphate biosynthesis. Functionally, catalyzes the rearrangement of 1-deoxy-D-xylulose 5-phosphate (DXP) to produce the thiazole phosphate moiety of thiamine. Sulfur is provided by the thiocarboxylate moiety of the carrier protein ThiS. In vitro, sulfur can be provided by H(2)S. This Escherichia coli O157:H7 protein is Thiazole synthase.